Here is a 330-residue protein sequence, read N- to C-terminus: Laforin (330 aa).

The CBM20 domain occupies 1 to 123 (MLFRFGVVVP…DNLVDGVYCL (123 aa)). Residue S25 is modified to Phosphoserine; by AMPK. Substrate-binding positions include W32, K86, 102-106 (GPHHD), D196, D234, and R240. The Tyrosine-protein phosphatase domain occupies 155–322 (HYSRILPNIW…QQDFSQKFGK (168 aa)). Residue C265 is the Phosphocysteine intermediate of the active site. Residues 265–271 (CNAGVGR) carry the Glucan phosphatase signature motif CXAGXGR motif. Substrate-binding positions include 266-271 (NAGVGR) and Y303.

The protein belongs to the protein-tyrosine phosphatase family. As to quaternary structure, homodimer. Interacts with PPP1R3B, PPP1R3C, HIRIP5, and EPM2AIP1. Binds glycogen and Lafora bodies. Interacts with NHLRC1/malin (via the NHL repeats). Forms a complex with NHLRC1/malin and HSP70. Interacts with PPP1R3D; in the presence of NHLC1/malin the interaction leads to ubiquitination and autophagic degradation of PPP1R3D. Interacts (via the phosphatase domain) with MAPT/Tau; the interaction dephosphorylates MAPT. Interacts with PRDM8. In terms of processing, polyubiquitinated by NHLRC1/malin. Phosphorylation on Ser-25 by AMPK affects the phosphatase activity of the enzyme and its ability to homodimerize and interact with NHLRC1, PPP1R3C or PRKAA2. Detected in skeletal muscle and in brain (at protein level). Widely expressed. Higher levels of expression are found in heart, brain, liver, skeletal muscle and kidney.

Its subcellular location is the cytoplasm. It is found in the endoplasmic reticulum membrane. The protein resides in the cell membrane. It carries out the reaction O-phospho-L-tyrosyl-[protein] + H2O = L-tyrosyl-[protein] + phosphate. The enzyme catalyses O-phospho-L-seryl-[protein] + H2O = L-seryl-[protein] + phosphate. It catalyses the reaction O-phospho-L-threonyl-[protein] + H2O = L-threonyl-[protein] + phosphate. Plays an important role in preventing glycogen hyperphosphorylation and the formation of insoluble aggregates, via its activity as glycogen phosphatase, and by promoting the ubiquitination of proteins involved in glycogen metabolism via its interaction with the E3 ubiquitin ligase NHLRC1/malin. Dephosphorylates phosphotyrosine and synthetic substrates, such as para-nitrophenylphosphate (pNPP), and has low activity with phosphoserine and phosphothreonine substrates (in vitro). Has also been shown to dephosphorylate MAPT. Shows strong phosphatase activity towards complex carbohydrates in vitro, avoiding glycogen hyperphosphorylation which is associated with reduced branching and formation of insoluble aggregates. Forms a complex with NHLRC1/malin and HSP70, which suppresses the cellular toxicity of misfolded proteins by promoting their degradation through the ubiquitin-proteasome system (UPS). Acts as a scaffold protein to facilitate PPP1R3C/PTG ubiquitination by NHLRC1/malin. Also promotes proteasome-independent protein degradation through the macroautophagy pathway. This is Laforin (Epm2a) from Mus musculus (Mouse).